We begin with the raw amino-acid sequence, 445 residues long: MTTILKGLPKGEKVGIAFSGGLDTSAALLWMKQKGARCFAYTANLGQPDESDYDEIPRKAMSFGAEKARLVDCRTQLVHEGIAAIQSGAFHISTGGATYFNTTPLGRAVTGTMLVAAMKEDGVNIWGDGSTYKGNDIERFYRYGLLTNPNLKIYKPWLDQQFIDELGGRAEMSAFLTANGFDYKMSAEKAYSTDSNLLGATHEAKDLENLNSGIRIVNPIMGVPFWREDCVVKPETVVVRFEEGQPVALNGQTFTDPVALFLEANAIGGRHGLGMCDQIENRIIEAKSRGIYEAPGMALLHIAYERLLTGIHNEDTIEQYRINGLRLGRLLYQGRWFDSQALMLRETAQRWVASAITGEVTLELRRGNDYSLLNTESPNLTYQPERLSMEKVEDAAFTPADRIGQLTMRNLDITDTRTKLKLYSETGLLTGSEGAQIFQLGHDKG.

ATP-binding positions include 17–25 and A43; that span reads AFSGGLDTS. Y99 lines the L-citrulline pocket. ATP is bound by residues G129 and T131. The L-aspartate site is built by T131, N135, and D136. N135 contacts L-citrulline. D136 lines the ATP pocket. Residues R139 and S192 each contribute to the L-citrulline site. ATP is bound at residue D194. Residues T201, E203, and E280 each coordinate L-citrulline.

It belongs to the argininosuccinate synthase family. Type 2 subfamily. Homotetramer.

It localises to the cytoplasm. The catalysed reaction is L-citrulline + L-aspartate + ATP = 2-(N(omega)-L-arginino)succinate + AMP + diphosphate + H(+). The protein operates within amino-acid biosynthesis; L-arginine biosynthesis; L-arginine from L-ornithine and carbamoyl phosphate: step 2/3. The chain is Argininosuccinate synthase from Bradyrhizobium sp. (strain BTAi1 / ATCC BAA-1182).